We begin with the raw amino-acid sequence, 36 residues long: Cytochrome b6-f complex subunit 5 (36 aa).

A helical transmembrane segment spans residues 5–25 (LLSGIVLGLIPITILGLLMAA).

It belongs to the PetG family. As to quaternary structure, the 4 large subunits of the cytochrome b6-f complex are cytochrome b6, subunit IV (17 kDa polypeptide, PetD), cytochrome f and the Rieske protein, while the 4 small subunits are PetG, PetL, PetM and PetN. The complex functions as a dimer.

It is found in the plastid. The protein resides in the chloroplast thylakoid membrane. In terms of biological role, component of the cytochrome b6-f complex, which mediates electron transfer between photosystem II (PSII) and photosystem I (PSI), cyclic electron flow around PSI, and state transitions. PetG is required for either the stability or assembly of the cytochrome b6-f complex. In Cyanidioschyzon merolae (strain NIES-3377 / 10D) (Unicellular red alga), this protein is Cytochrome b6-f complex subunit 5.